The primary structure comprises 161 residues: Transcription elongation factor GreA (161 aa).

The stretch at 43–68 forms a coiled coil; that stretch reads SENAEYEAAREKQAFVEARIKHLEDI.

Belongs to the GreA/GreB family.

Its function is as follows. Necessary for efficient RNA polymerase transcription elongation past template-encoded arresting sites. The arresting sites in DNA have the property of trapping a certain fraction of elongating RNA polymerases that pass through, resulting in locked ternary complexes. Cleavage of the nascent transcript by cleavage factors such as GreA or GreB allows the resumption of elongation from the new 3'terminus. GreA releases sequences of 2 to 3 nucleotides. This Rickettsia bellii (strain OSU 85-389) protein is Transcription elongation factor GreA.